We begin with the raw amino-acid sequence, 148 residues long: MFRGVATVSLDSKNRLVVPARYRDALLVNGAGRVVVTADPGQCLLLYPLPEWEPIEKKLTALSDFNPRTRSLKQLLVGYAHDIDMDSAGRVLLPPMLRKFAELDKNVVLVGQGSKVELWNEARWEAQVAQALSFSQEALPSELEGFTL.

SpoVT-AbrB domains follow at residues Val-5–Glu-51 and Ala-80–Arg-123.

This sequence belongs to the MraZ family. As to quaternary structure, forms oligomers.

It localises to the cytoplasm. Its subcellular location is the nucleoid. This chain is Transcriptional regulator MraZ, found in Thiobacillus denitrificans (strain ATCC 25259 / T1).